The primary structure comprises 547 residues: MAAKQVLFGDDARAKVVQGVNILANAVKVTLGPKGRNVVLERSFGAPTVTKDGVSVAKEIELKDKFENIGAQLVKEVASKTADNAGDGTTTATVLAQAIVREGFKFVAAGFNPADLKRGIDKAVAAIVDELKALSKPTTTSKEIAQVGAISANSDADIGDIIAKAIDKVGKEGVITVEDGKSLNNELDVVEGLQFDRGYLSPYFINNPDKQVAELDNPFILLFDKKISNIRELLPVLEQVAKAGSPLLVVAEDVDGEALATLVVNTIRGILKVVAVKAPGFGDRRKAILEDIAILTGGQVIAEEVGLSLEKATLADLGQAKRVEVQKENTTLIDGAGSVEAIKARVSSIDALIAAATSDYDREKLQERKAKLAGGVAVIKVGAATEVELKEKKARVEDALHATRAAVEEGIVPGGGVALLRARAAIKDLKGDNHEQDAGIKIVLRAVEEPLRQIVANAGDEASVVVARVLEGSGNFGYNAANGQYGDLVEQGVLDPAKVTRSALQNAASVAALILTTDALVAEQADDKPATAGLPHGGPGGFGGPEF.

ATP-binding positions include 30-33, lysine 51, 87-91, glycine 415, 479-481, and aspartate 495; these read TLGP, DGTTT, and NAA. The disordered stretch occupies residues 528–547; that stretch reads KPATAGLPHGGPGGFGGPEF. Residues 535-547 show a composition bias toward gly residues; it reads PHGGPGGFGGPEF.

The protein belongs to the chaperonin (HSP60) family. As to quaternary structure, forms a cylinder of 14 subunits composed of two heptameric rings stacked back-to-back. Interacts with the co-chaperonin GroES.

It localises to the cytoplasm. The catalysed reaction is ATP + H2O + a folded polypeptide = ADP + phosphate + an unfolded polypeptide.. Its function is as follows. Together with its co-chaperonin GroES, plays an essential role in assisting protein folding. The GroEL-GroES system forms a nano-cage that allows encapsulation of the non-native substrate proteins and provides a physical environment optimized to promote and accelerate protein folding. This chain is Chaperonin GroEL 2, found in Azoarcus sp. (strain BH72).